Reading from the N-terminus, the 43-residue chain is Protein PsbN (43 aa).

The chain crosses the membrane as a helical span at residues 7–27 (IAIFISCLIVSFTGYALYTAF).

This sequence belongs to the PsbN family.

Its subcellular location is the plastid. It is found in the chloroplast thylakoid membrane. May play a role in photosystem I and II biogenesis. The protein is Protein PsbN of Psilotum nudum (Whisk fern).